A 56-amino-acid chain; its full sequence is Protein translocase subunit SecE (56 aa).

Residues 30 to 50 form a helical membrane-spanning segment; sequence VFWLVLFVSIFLGIVDYLMFL.

It belongs to the SecE/SEC61-gamma family. In terms of assembly, component of the Sec protein translocase complex. Heterotrimer consisting of SecY, SecE and SecG subunits. The heterotrimers can form oligomers, although 1 heterotrimer is thought to be able to translocate proteins. Interacts with the ribosome. Interacts with SecDF, and other proteins may be involved. Interacts with SecA.

The protein resides in the cell inner membrane. Essential subunit of the Sec protein translocation channel SecYEG. Clamps together the 2 halves of SecY. May contact the channel plug during translocation. The chain is Protein translocase subunit SecE from Borreliella burgdorferi (strain ATCC 35210 / DSM 4680 / CIP 102532 / B31) (Borrelia burgdorferi).